Consider the following 306-residue polypeptide: Recombination-associated protein RdgC (306 aa).

The protein belongs to the RdgC family.

The protein localises to the cytoplasm. It is found in the nucleoid. In terms of biological role, may be involved in recombination. This Pseudomonas fluorescens (strain SBW25) protein is Recombination-associated protein RdgC.